Here is a 278-residue protein sequence, read N- to C-terminus: Phosphonates import ATP-binding protein PhnC (278 aa).

Residues Leu-25–Ser-273 form the ABC transporter domain. Gly-58–Ser-65 serves as a coordination point for ATP.

Belongs to the ABC transporter superfamily. Phosphonates importer (TC 3.A.1.9.1) family. As to quaternary structure, the complex is composed of two ATP-binding proteins (PhnC), two transmembrane proteins (PhnE) and a solute-binding protein (PhnD).

It localises to the cell inner membrane. It catalyses the reaction phosphonate(out) + ATP + H2O = phosphonate(in) + ADP + phosphate + H(+). Functionally, part of the ABC transporter complex PhnCDE involved in phosphonates import. Responsible for energy coupling to the transport system. This is Phosphonates import ATP-binding protein PhnC from Yersinia pestis bv. Antiqua (strain Antiqua).